A 265-amino-acid chain; its full sequence is MGQILGKIMMSHQPQPQEERSPQRSTSGYPLQEVVDDEVLGPSAPGVDPSPPRRSLGWKRKRECLDESDDEPEKELAPEPEETWVAETLCGLKMKAKRRRVSLVLPEYYEAFNRLLEDPVIKRLLAWDKDLRVSDKYLLAMVIAYFSRAGLPSWQYQRIHFFLALYLANDMEEDDEAPKQNIFYFLYEETRSHIPLLSELWFQLCRYMNPRARKNCSQIALFRKYRFHFFCSMRCRAWVSLEELEEIQAYDPEHWVWARDRAHLS.

The interval 1–80 is disordered; sequence MGQILGKIMM…EPEKELAPEP (80 aa). Residues 66–80 show a composition bias toward acidic residues; sequence DESDDEPEKELAPEP.

This sequence belongs to the Speedy/Ringo family.

The polypeptide is Speedy protein E13 (Homo sapiens (Human)).